The primary structure comprises 397 residues: Riboflavin biosynthesis protein RibBA (397 aa).

Residues 1–199 (MFHRIEEALE…IEDLIAYRRH (199 aa)) are DHBP synthase. D-ribulose 5-phosphate contacts are provided by residues 26–27 (RE), Asp-31, 138–142 (RAGHT), and Glu-162. Glu-27 provides a ligand contact to Mg(2+). Residue His-141 coordinates Mg(2+). The GTP cyclohydrolase II stretch occupies residues 200–397 (HETLVTREVE…VNKLGHLLNL (198 aa)). A GTP-binding site is contributed by 250 to 254 (RVHSE). Residues Cys-255, Cys-266, and Cys-268 each coordinate Zn(2+). GTP-binding positions include Gln-271, 293-295 (EGR), and Thr-315. Asp-327 serves as the catalytic Proton acceptor; for GTP cyclohydrolase activity. The active-site Nucleophile; for GTP cyclohydrolase activity is Arg-329. 2 residues coordinate GTP: Thr-350 and Lys-355.

The protein in the N-terminal section; belongs to the DHBP synthase family. In the C-terminal section; belongs to the GTP cyclohydrolase II family. Mg(2+) serves as cofactor. Mn(2+) is required as a cofactor. The cofactor is Zn(2+).

It catalyses the reaction D-ribulose 5-phosphate = (2S)-2-hydroxy-3-oxobutyl phosphate + formate + H(+). The enzyme catalyses GTP + 4 H2O = 2,5-diamino-6-hydroxy-4-(5-phosphoribosylamino)-pyrimidine + formate + 2 phosphate + 3 H(+). It functions in the pathway cofactor biosynthesis; riboflavin biosynthesis; 2-hydroxy-3-oxobutyl phosphate from D-ribulose 5-phosphate: step 1/1. It participates in cofactor biosynthesis; riboflavin biosynthesis; 5-amino-6-(D-ribitylamino)uracil from GTP: step 1/4. Functionally, catalyzes the conversion of D-ribulose 5-phosphate to formate and 3,4-dihydroxy-2-butanone 4-phosphate. In terms of biological role, catalyzes the conversion of GTP to 2,5-diamino-6-ribosylamino-4(3H)-pyrimidinone 5'-phosphate (DARP), formate and pyrophosphate. The sequence is that of Riboflavin biosynthesis protein RibBA from Bacillus cereus (strain ATCC 10987 / NRS 248).